Consider the following 828-residue polypeptide: Sarcolemmal membrane-associated protein (828 aa).

The necessary for targeting to centrosomes stretch occupies residues Met1–Gln163. Topologically, residues Met1–Pro802 are cytoplasmic. Residues Ile28–Leu85 enclose the FHA domain. Phosphoserine is present on Ser148. Coiled coils occupy residues Gln167–Thr202 and Asn230–Thr388. Residues Lys339–Lys359 form a helical; Anchor for type IV membrane protein membrane-spanning segment. Residues Lys433–Asp446 show a composition bias toward basic and acidic residues. Residues Lys433–Met467 are disordered. A phosphoserine mark is found at Ser448 and Ser452. A coiled-coil region spans residues Ala477–Lys799. Residues Trp803–Leu823 traverse the membrane as a helical; Anchor for type IV membrane protein segment. The Extracellular portion of the chain corresponds to Ala824 to Pro828.

Belongs to the SLMAP family. As to quaternary structure, homodimer. Interacts with myosin. Interacts with SIKE1 and both associate with the STRIPAK core complex composed of PP2A catalytic and scaffolding subunits, the striatins (PP2A regulatory subunits), the striatin-associated proteins MOB4, STRIP1 and STRIP2, PDCD10 and members of the STE20 kinases, such as STK24 and STK26. Interacts (via FHA domain) with STK3 (when phosphorylated); the interaction associates STK3 with the STRIPAK complex.

The protein localises to the cell membrane. The protein resides in the sarcolemma. It is found in the cytoplasm. Its subcellular location is the myofibril. It localises to the sarcomere. The protein localises to the m line. The protein resides in the z line. It is found in the cytoskeleton. Its subcellular location is the microtubule organizing center. It localises to the centrosome. The protein localises to the endoplasmic reticulum membrane. The protein resides in the mitochondrion membrane. Functionally, associates with the striatin-interacting phosphatase and kinase (STRIPAK) core complex, forming the extended (SIKE1:SLMAP)STRIPAK complex. The (SIKE1:SLMAP)STRIPAK complex dephosphorylates STK3 leading to the inhibition of Hippo signaling and the control of cell growth. May play a role during myoblast fusion. This chain is Sarcolemmal membrane-associated protein, found in Homo sapiens (Human).